The sequence spans 250 residues: Urease accessory protein UreG 3 (250 aa).

Residues 1 to 24 (MPDNASAQQPGQPAQGPNEHYHQP) are disordered. Positions 7-17 (AQQPGQPAQGP) are enriched in low complexity. Position 37–44 (37–44 (GPVGTGKS)) interacts with GTP. Residues 230–250 (GTHVPTDPGPMAPHSHSHDGS) are disordered.

It belongs to the SIMIBI class G3E GTPase family. UreG subfamily. As to quaternary structure, homodimer. UreD, UreF and UreG form a complex that acts as a GTP-hydrolysis-dependent molecular chaperone, activating the urease apoprotein by helping to assemble the nickel containing metallocenter of UreC. The UreE protein probably delivers the nickel.

The protein localises to the cytoplasm. In terms of biological role, facilitates the functional incorporation of the urease nickel metallocenter. This process requires GTP hydrolysis, probably effectuated by UreG. This chain is Urease accessory protein UreG 3, found in Streptomyces griseus subsp. griseus (strain JCM 4626 / CBS 651.72 / NBRC 13350 / KCC S-0626 / ISP 5235).